The following is an 85-amino-acid chain: Beta-insect depressant toxin Lqh-dprIT3g (85 aa).

The signal sequence occupies residues 1-21 (MKLLLLLTISASMLIEGLVNA). The LCN-type CS-alpha/beta domain maps to 22–82 (DGYIRGGDGC…EWDYETDTCG (61 aa)). Cystine bridges form between Cys31–Cys81, Cys35–Cys56, Cys42–Cys63, and Cys46–Cys65. At Gly82 the chain carries Glycine amide.

It belongs to the long (4 C-C) scorpion toxin superfamily. Sodium channel inhibitor family. Beta subfamily. In terms of tissue distribution, expressed by the venom gland.

Its subcellular location is the secreted. Functionally, depressant insect beta-toxins cause a transient contraction paralysis followed by a slow flaccid paralysis. They bind voltage-independently at site-4 of sodium channels (Nav) and block action potentials, primarily by depolarizing the axonal membrane and suppressing the sodium current. This depressant toxin is active only on insects. It is found in a relatively small amount in the venom. The sequence is that of Beta-insect depressant toxin Lqh-dprIT3g from Leiurus hebraeus (Hebrew deathstalker scorpion).